Reading from the N-terminus, the 95-residue chain is MKIRPIGDRILIKFKEREEVTKSGIVLPDTVKEKPQIAEVIEVGPGGIVDGEKVEMVVKKGDKVIVSKYAGTEIKIDGEEYTIIRQDDVLAIIED.

It belongs to the GroES chaperonin family. Heptamer of 7 subunits arranged in a ring. Interacts with the chaperonin GroEL.

The protein resides in the cytoplasm. Functionally, together with the chaperonin GroEL, plays an essential role in assisting protein folding. The GroEL-GroES system forms a nano-cage that allows encapsulation of the non-native substrate proteins and provides a physical environment optimized to promote and accelerate protein folding. GroES binds to the apical surface of the GroEL ring, thereby capping the opening of the GroEL channel. This chain is Co-chaperonin GroES, found in Caldicellulosiruptor bescii (strain ATCC BAA-1888 / DSM 6725 / KCTC 15123 / Z-1320) (Anaerocellum thermophilum).